A 464-amino-acid polypeptide reads, in one-letter code: NADH dehydrogenase [ubiquinone] flavoprotein 1, mitochondrial (464 aa).

A mitochondrion-targeting transit peptide spans 1–20 (MLAARRLLGGSLPSRVSVRF). The residue at position 81 (K81) is an N6-acetyllysine; alternate. K81 is modified (N6-succinyllysine; alternate). 87–96 (GRGGAGFPTG) is a binding site for NADH. K104 is modified (N6-acetyllysine). 199-247 (RGAGAYICGEETALIESIEGKQGKPRLKPPFPADVGVFGCPTTVANVET) contributes to the FMN binding site. An Omega-N-methylarginine modification is found at R257. The residue at position 375 (K375) is an N6-acetyllysine. C379, C382, C385, and C425 together coordinate [4Fe-4S] cluster.

The protein belongs to the complex I 51 kDa subunit family. In terms of assembly, core subunit of respiratory chain NADH dehydrogenase (Complex I) which is composed of 45 different subunits. This is a component of the flavoprotein-sulfur (FP) fragment of the enzyme. Interacts with RAB5IF. It depends on FMN as a cofactor. [4Fe-4S] cluster serves as cofactor.

The protein resides in the mitochondrion inner membrane. It carries out the reaction a ubiquinone + NADH + 5 H(+)(in) = a ubiquinol + NAD(+) + 4 H(+)(out). Its function is as follows. Core subunit of the mitochondrial membrane respiratory chain NADH dehydrogenase (Complex I) which catalyzes electron transfer from NADH through the respiratory chain, using ubiquinone as an electron acceptor. Part of the peripheral arm of the enzyme, where the electrons from NADH are accepted by flavin mononucleotide (FMN) and then passed along a chain of iron-sulfur clusters by electron tunnelling to the final acceptor ubiquinone. Contains FMN, which is the initial electron acceptor as well as one iron-sulfur cluster. The sequence is that of NADH dehydrogenase [ubiquinone] flavoprotein 1, mitochondrial from Macaca fascicularis (Crab-eating macaque).